Consider the following 226-residue polypeptide: ATP synthase subunit a (226 aa).

A run of 5 helical transmembrane segments spans residues 20 to 40 (LNWLSTFLGLLLIPFSFWLLP), 74 to 94 (FISLFSLIMFNNFLGLFPYIF), 100 to 120 (LTLTLALAFPLWLSFMLYGWI), 158 to 180 (LAVRLTANMIAGHLLLTLLGNTG), and 197 to 217 (IALLVLESAVAIIQSYVFAVL).

Belongs to the ATPase A chain family. As to quaternary structure, F-type ATPases have 2 components, CF(1) - the catalytic core - and CF(0) - the membrane proton channel. CF(1) has five subunits: alpha(3), beta(3), gamma(1), delta(1), epsilon(1). CF(0) has three main subunits: a, b and c.

It localises to the mitochondrion inner membrane. In terms of biological role, mitochondrial membrane ATP synthase (F(1)F(0) ATP synthase or Complex V) produces ATP from ADP in the presence of a proton gradient across the membrane which is generated by electron transport complexes of the respiratory chain. F-type ATPases consist of two structural domains, F(1) - containing the extramembraneous catalytic core and F(0) - containing the membrane proton channel, linked together by a central stalk and a peripheral stalk. During catalysis, ATP synthesis in the catalytic domain of F(1) is coupled via a rotary mechanism of the central stalk subunits to proton translocation. Key component of the proton channel; it may play a direct role in the translocation of protons across the membrane. The protein is ATP synthase subunit a (ATP6) of Anopheles quadrimaculatus (Common malaria mosquito).